Reading from the N-terminus, the 177-residue chain is Thymidine kinase (177 aa).

An ATP-binding site is contributed by Gly11–Ser18. The active-site Proton acceptor is Glu83. Phe113 lines the substrate pocket. 2 residues coordinate Zn(2+): Cys138 and Cys141. Ile157 to Gly161 lines the substrate pocket. 2 residues coordinate Zn(2+): Cys170 and Cys173.

The protein belongs to the thymidine kinase family. As to quaternary structure, homotetramer. Two molecules of substrate bind to each enzyme tetramer.

The catalysed reaction is thymidine + ATP = dTMP + ADP + H(+). Phosphorylates thymidine and thymidine analogs, such as azidothymidine (AZT). Part of the salvage pathway for pyrimidine deoxyribonucleotide synthesis. This is Thymidine kinase (OPG101) from Variola virus.